The chain runs to 602 residues: Elongation factor 4 (602 aa).

In terms of domain architecture, tr-type G spans 7–189 (KYIRNFSIVA…AIVNKVPAPD (183 aa)). GTP contacts are provided by residues 19–24 (DHGKST) and 136–139 (NKID).

It belongs to the TRAFAC class translation factor GTPase superfamily. Classic translation factor GTPase family. LepA subfamily.

Its subcellular location is the cell membrane. It carries out the reaction GTP + H2O = GDP + phosphate + H(+). Required for accurate and efficient protein synthesis under certain stress conditions. May act as a fidelity factor of the translation reaction, by catalyzing a one-codon backward translocation of tRNAs on improperly translocated ribosomes. Back-translocation proceeds from a post-translocation (POST) complex to a pre-translocation (PRE) complex, thus giving elongation factor G a second chance to translocate the tRNAs correctly. Binds to ribosomes in a GTP-dependent manner. This Clostridium botulinum (strain Kyoto / Type A2) protein is Elongation factor 4.